Here is a 373-residue protein sequence, read N- to C-terminus: NADPH-dependent 3-keto-steroid reductase Hsd3b5 (373 aa).

NADP(+) contacts are provided by residues G10–L15, Y155, and K159. Catalysis depends on K159, which acts as the Proton donor. Residues L288–V308 form a helical membrane-spanning segment. K350 is subject to N6-acetyllysine.

This sequence belongs to the 3-beta-HSD family. Expressed in the male liver, starting in late puberty.

It is found in the endoplasmic reticulum membrane. The protein resides in the mitochondrion membrane. The enzyme catalyses a 3beta-hydroxysteroid + NADP(+) = a 3-oxosteroid + NADPH + H(+). It carries out the reaction 5alpha-androstane-3beta,17beta-diol + NADP(+) = 17beta-hydroxy-5alpha-androstan-3-one + NADPH + H(+). It functions in the pathway steroid metabolism. In terms of biological role, responsible for the reduction of the oxo group on the C-3 of 5alpha-androstane steroids. Catalyzes the conversion of dihydrotestosterone to its inactive form 5alpha-androstanediol, that does not bind androgen receptor/AR. Does not function as an isomerase. This is NADPH-dependent 3-keto-steroid reductase Hsd3b5 from Mus musculus (Mouse).